The primary structure comprises 142 residues: Large ribosomal subunit protein uL13 (142 aa).

It belongs to the universal ribosomal protein uL13 family. In terms of assembly, part of the 50S ribosomal subunit.

Its function is as follows. This protein is one of the early assembly proteins of the 50S ribosomal subunit, although it is not seen to bind rRNA by itself. It is important during the early stages of 50S assembly. This Buchnera aphidicola subsp. Cinara cedri (strain Cc) protein is Large ribosomal subunit protein uL13.